Reading from the N-terminus, the 242-residue chain is Ribonuclease PH (242 aa).

Residues R86 and 124–126 (GTR) contribute to the phosphate site.

Belongs to the RNase PH family. In terms of assembly, homohexameric ring arranged as a trimer of dimers.

It catalyses the reaction tRNA(n+1) + phosphate = tRNA(n) + a ribonucleoside 5'-diphosphate. Its function is as follows. Phosphorolytic 3'-5' exoribonuclease that plays an important role in tRNA 3'-end maturation. Removes nucleotide residues following the 3'-CCA terminus of tRNAs; can also add nucleotides to the ends of RNA molecules by using nucleoside diphosphates as substrates, but this may not be physiologically important. Probably plays a role in initiation of 16S rRNA degradation (leading to ribosome degradation) during starvation. This Bacillus pumilus (strain SAFR-032) protein is Ribonuclease PH.